The sequence spans 406 residues: S-adenosylmethionine synthase (406 aa).

Residue 141-146 (GQGSMD) coordinates ATP.

Belongs to the AdoMet synthase 2 family. In terms of assembly, homodimer. Mg(2+) is required as a cofactor.

It carries out the reaction L-methionine + ATP + H2O = S-adenosyl-L-methionine + phosphate + diphosphate. The protein operates within amino-acid biosynthesis; S-adenosyl-L-methionine biosynthesis; S-adenosyl-L-methionine from L-methionine: step 1/1. In terms of biological role, catalyzes the formation of S-adenosylmethionine from methionine and ATP. The protein is S-adenosylmethionine synthase (mat) of Methanocaldococcus jannaschii (strain ATCC 43067 / DSM 2661 / JAL-1 / JCM 10045 / NBRC 100440) (Methanococcus jannaschii).